Consider the following 136-residue polypeptide: Large ribosomal subunit protein uL16 (136 aa).

It belongs to the universal ribosomal protein uL16 family. In terms of assembly, part of the 50S ribosomal subunit.

In terms of biological role, binds 23S rRNA and is also seen to make contacts with the A and possibly P site tRNAs. In Orientia tsutsugamushi (strain Boryong) (Rickettsia tsutsugamushi), this protein is Large ribosomal subunit protein uL16.